Reading from the N-terminus, the 489-residue chain is MLSFATLRGRISTVDAAKAAPPPSPLAPIDLTDHSQVAGVMNLAARIGDILLSSGTSNSDTKVQVRAVTSAYGLYYTHVDITLNTITIFTNIGVERKMPVNVFHVVGKLDTNFSKLSEVDRLIRSIQAGATPPEVAEKILDELEQSPASYGFPVALLGWAMMGGAVAVLLGGGWQVSLIAFITAFTIIATTSFLGKKGLPTFFQNVVGGFIATLPASIAYSLALQFGLEIKPSQIIASGIVVLLAGLTLVQSLQDGITGAPVTASARFFETLLFTGGIVAGVGLGIQLSEILHVMLPAMESAAAPNYSSTFARIIAGGVTAAAFAVGCYAEWSSVIIAGLTALMGSAFYYLFVVYLGPVSAAAIAATAVGFTGGLLARRFLIPPLIVAIAGITPMLPGLAIYRGMYATLNDQTLMGFTNIAVALATASSLAAGVVLGEWIARRLRRPPRFNPYRAFTKANEFSFQEEAEQNQRRQRKRPKTNQRFGNKR.

10 helical membrane passes run 151–171 (GFPV…VLLG), 174–194 (WQVS…TSFL), 206–226 (VVGG…ALQF), 233–253 (SQII…VQSL), 268–288 (FFET…GIQL), 314–334 (IIAG…EWSS), 335–355 (VIIA…FVVY), 356–376 (LGPV…GGLL), 381–401 (LIPP…GLAI), and 420–440 (IAVA…GEWI). The interval 464–489 (FQEEAEQNQRRQRKRPKTNQRFGNKR) is disordered. Residues 473–489 (RRQRKRPKTNQRFGNKR) are compositionally biased toward basic residues.

It belongs to the ThrE exporter (TC 2.A.79) family.

It localises to the cell membrane. The catalysed reaction is L-threonine(in) + H(+)(out) = L-threonine(out) + H(+)(in). Transport is inhibited by the proton ionophore carbonyl cyanide m-chlorophenylhydrazone (CCCP). Its function is as follows. Catalyzes the export of L-threonine and L-serine from the cell to the extracellular environment. Export is dependent on the proton motive force. This is Threonine/serine exporter from Corynebacterium glutamicum (Brevibacterium saccharolyticum).